The chain runs to 457 residues: Cysteine desulfurase (457 aa).

Ala127, Thr128, Gln235, Ser255, and His257 together coordinate pyridoxal 5'-phosphate. An N6-(pyridoxal phosphate)lysine modification is found at Lys258. Pyridoxal 5'-phosphate is bound at residue Thr295. The active-site Cysteine persulfide intermediate is the Cys381. Cys381 lines the [2Fe-2S] cluster pocket. Cys381 is a binding site for Zn(2+). Cys381 carries the post-translational modification Cysteine persulfide.

This sequence belongs to the class-V pyridoxal-phosphate-dependent aminotransferase family. NifS/IscS subfamily. Homodimer. Component of the mitochondrial core iron-sulfur cluster (ISC) complex composed of NFS1, LYRM4, NDUFAB1, ISCU, FXN, and FDX2; this complex is a heterohexamer containing two copies of each monomer. Component of cyteine desulfurase complex composed of NFS1, LYRM4 and NDUFAB1; this complex contributes to the activation of cysteine desulfurase activity and NFS1 stabilization. Interacts (homodimer form) with ISCU (D-state); each monomer interacts with the C-terminal regions of each NFS1 monomer. Interacts with HSPA9. Interacts (via homodimer form) with FDX2. Interacts (via homodimer form) with FXN. Interacts with LYRM4. Component of a complex composed of FXN, NFS1, LYRM4 and ISCU. As to quaternary structure, monomer. Homodimer. Oligomer. Interacts with ISCU. Component of the cysteine desulfurase complex composed of NFS1 and LYRM4; this complex contributes to the activation of cysteine desulfurase activity. Interacts with MOCS3. The cofactor is pyridoxal 5'-phosphate. In terms of processing, N-gluconoylated. Post-translationally, cysteine persulfide intermediate is reduced by thiol-containing molecules like glutathione and L-cysteine. Persulfide reduction is a rate-limiting step of cysteine desulfurase catalytic cycle.

It is found in the mitochondrion. Its subcellular location is the cytoplasm. It localises to the nucleus. The protein localises to the cytoskeleton. The protein resides in the microtubule organizing center. It is found in the centrosome. The enzyme catalyses (sulfur carrier)-H + L-cysteine = (sulfur carrier)-SH + L-alanine. It carries out the reaction L-cysteinyl-[cysteine desulfurase] + L-cysteine = S-sulfanyl-L-cysteinyl-[cysteine desulfurase] + L-alanine. Its activity is regulated as follows. Active only in complex with LYRM4. Cysteine desulfurase, of the core iron-sulfur cluster (ISC) assembly complex, that catalyzes the desulfuration of L-cysteine to L-alanine, as component of the cysteine desulfurase complex leading to the formation of a cysteine persulfide intermediate at the active site cysteine residue and participates in the [2Fe-2S] clusters assembly on the scaffolding protein ISCU. The persulfide is then transferred on the flexible Cys loop from the catalytic site of NFS1 to the surface of NFS1. After the NFS1-linked persulfide sulfur is transferred to one of the conserved Cys residues of the scaffold, a reaction assisted by FXN. The core iron-sulfur cluster (ISC) assembly complex is involved in the de novo synthesis of a [2Fe-2S] cluster, the first step of the mitochondrial iron-sulfur protein biogenesis. This process is initiated by the cysteine desulfurase complex (NFS1:LYRM4:NDUFAB1) that produces persulfide which is delivered on the scaffold protein ISCU in a FXN-dependent manner. Then this complex is stabilized by FDX2 which provides reducing equivalents to accomplish the [2Fe-2S] cluster assembly. Finally, the [2Fe-2S] cluster is transferred from ISCU to chaperone proteins, including HSCB, HSPA9 and GLRX5. Functionally, may catalyze the desulfuration of L-cysteine to L-alanine as component of the cysteine desulfurase complex (NFS1:LYRM4), leading to the formation of a cysteine persulfide intermediate. Acts as a sulfur donor for MOCS3 by transferring the sulfur of the cysteine persulfide intermediate on MOCS3. The chain is Cysteine desulfurase from Pongo abelii (Sumatran orangutan).